Consider the following 369-residue polypeptide: Ubiquitin-conjugating enzyme E2 Q2 (369 aa).

Residues 117-143 (DQPLPTGQNGTTEEVTSEEEEEEEMAE) are disordered. Residues 131-143 (VTSEEEEEEEMAE) show a composition bias toward acidic residues. The UBC core domain maps to 198–362 (QASDRLMKEL…VQIHEKNGWY (165 aa)). Cys298 acts as the Glycyl thioester intermediate in catalysis.

It belongs to the ubiquitin-conjugating enzyme family. Post-translationally, auto-ubiquitinated in vitro. In terms of tissue distribution, detected at embryo implantation sites in the luminal epithelium of pregnant endometrium. Detected at low levels in ovary and liver.

Its subcellular location is the cytoplasm. It carries out the reaction S-ubiquitinyl-[E1 ubiquitin-activating enzyme]-L-cysteine + [E2 ubiquitin-conjugating enzyme]-L-cysteine = [E1 ubiquitin-activating enzyme]-L-cysteine + S-ubiquitinyl-[E2 ubiquitin-conjugating enzyme]-L-cysteine.. The protein operates within protein modification; protein ubiquitination. Accepts ubiquitin from the E1 complex and catalyzes its covalent attachment to other proteins. In vitro catalyzes 'Lys-48'-linked polyubiquitination. The sequence is that of Ubiquitin-conjugating enzyme E2 Q2 (UBE2Q2) from Oryctolagus cuniculus (Rabbit).